The primary structure comprises 141 residues: Large ribosomal subunit protein uL11 (141 aa).

Belongs to the universal ribosomal protein uL11 family. Part of the ribosomal stalk of the 50S ribosomal subunit. Interacts with L10 and the large rRNA to form the base of the stalk. L10 forms an elongated spine to which L12 dimers bind in a sequential fashion forming a multimeric L10(L12)X complex. In terms of processing, one or more lysine residues are methylated.

Forms part of the ribosomal stalk which helps the ribosome interact with GTP-bound translation factors. In Clostridioides difficile (strain 630) (Peptoclostridium difficile), this protein is Large ribosomal subunit protein uL11.